We begin with the raw amino-acid sequence, 476 residues long: Ubiquinone biosynthesis monooxygenase COQ6, mitochondrial (476 aa).

The N-terminal 42 residues, 1–42 (MAARIGPMAGLLCVRWWSTAQLAARGGPLVACRRWTSSSTDS), are a transit peptide targeting the mitochondrion.

The protein belongs to the UbiH/COQ6 family. In terms of assembly, component of a multi-subunit COQ enzyme complex, composed of at least COQ3, COQ4, COQ5, COQ6, COQ7 and COQ9. Interacts with COQ8B and COQ7. FAD serves as cofactor. As to expression, in the kidney, expressed almost exclusively in glomerular podocytes. In the inner ear, expressed in the spiral ganglion, as well as in stria vascularis and spiral ligament cells.

It localises to the mitochondrion inner membrane. The protein localises to the golgi apparatus. Its subcellular location is the cell projection. The enzyme catalyses 4-hydroxy-3-(all-trans-decaprenyl)benzoate + 2 reduced [2Fe-2S]-[ferredoxin] + O2 + 2 H(+) = 3,4-dihydroxy-5-(all-trans-decaprenyl)benzoate + 2 oxidized [2Fe-2S]-[ferredoxin] + H2O. It catalyses the reaction 2-methoxy-6-(all-trans-decaprenyl)phenol + 2 reduced [2Fe-2S]-[ferredoxin] + O2 + 2 H(+) = 2-methoxy-6-(all-trans-decaprenyl)benzene-1,4-diol + 2 oxidized [2Fe-2S]-[ferredoxin] + H2O. Its pathway is cofactor biosynthesis; ubiquinone biosynthesis. FAD-dependent monooxygenase required for two non-consecutive steps during ubiquinone biosynthesis. Required for the C5-ring hydroxylation during ubiquinone biosynthesis by catalyzing the hydroxylation of 4-hydroxy-3-(all-trans-decaprenyl)benzoic acid to 3,4-dihydroxy-5-(all-trans-decaprenyl)benzoic acid. Also acts downstream of COQ4, for the C1-hydroxylation during ubiquinone biosynthesis by catalyzing the hydroxylation of 2-methoxy-6-(all-trans-decaprenyl)phenol to 2-methoxy-6-(all-trans-decaprenyl)benzene-1,4-diol. The electrons required for the hydroxylation reaction are funneled indirectly to COQ6 from NADPH via a ferredoxin/ferredoxin reductase system composed of FDX2 and FDXR. The polypeptide is Ubiquinone biosynthesis monooxygenase COQ6, mitochondrial (Rattus norvegicus (Rat)).